Reading from the N-terminus, the 85-residue chain is ATP synthase subunit c (85 aa).

Helical transmembrane passes span 10–30 (IAVGIIVGLASLGTAIGFALL) and 53–73 (FIIAGLLDAVPMIGIVIALLF).

The protein belongs to the ATPase C chain family. In terms of assembly, F-type ATPases have 2 components, F(1) - the catalytic core - and F(0) - the membrane proton channel. F(1) has five subunits: alpha(3), beta(3), gamma(1), delta(1), epsilon(1). F(0) has three main subunits: a(1), b(2) and c(10-14). The alpha and beta chains form an alternating ring which encloses part of the gamma chain. F(1) is attached to F(0) by a central stalk formed by the gamma and epsilon chains, while a peripheral stalk is formed by the delta and b chains.

It is found in the cell inner membrane. F(1)F(0) ATP synthase produces ATP from ADP in the presence of a proton or sodium gradient. F-type ATPases consist of two structural domains, F(1) containing the extramembraneous catalytic core and F(0) containing the membrane proton channel, linked together by a central stalk and a peripheral stalk. During catalysis, ATP synthesis in the catalytic domain of F(1) is coupled via a rotary mechanism of the central stalk subunits to proton translocation. Functionally, key component of the F(0) channel; it plays a direct role in translocation across the membrane. A homomeric c-ring of between 10-14 subunits forms the central stalk rotor element with the F(1) delta and epsilon subunits. The polypeptide is ATP synthase subunit c (Aliivibrio fischeri (strain ATCC 700601 / ES114) (Vibrio fischeri)).